Consider the following 201-residue polypeptide: MATAGSAASRRDPGRPCPFSIEHILSSLPERRPATRPPQPVGGRNPAELDEPEAPVPAAPCACCCCCNPRAATRGTPETSSGPGLRLAWPLRLAPATPSPLTAPRAGSPALTGTSGPGPQRRTRRHRTIFSEEQLQALEALFVQNQYPDVGTRERLAVRIRLREERVEVWFKNRRAKWRHQKRASSSRLLPGTKKTPKESC.

Disordered regions lie at residues 1 to 55, 95 to 124, and 179 to 201; these read MATA…PEAP, PATP…RRTR, and RHQK…KESC. The span at 95 to 106 shows a compositional bias: low complexity; the sequence is PATPSPLTAPRA. The homeobox DNA-binding region spans 123-182; the sequence is TRRHRTIFSEEQLQALEALFVQNQYPDVGTRERLAVRIRLREERVEVWFKNRRAKWRHQK.

The protein belongs to the paired homeobox family. Bicoid subfamily. Expressed in adult testis.

It is found in the nucleus. Its function is as follows. May have a role in development. May regulate its own transcription. May bind the bicoid consensus sequence TAATCC. The protein is Homeobox protein goosecoid-2 (Gsc2) of Mus musculus (Mouse).